A 60-amino-acid polypeptide reads, in one-letter code: Large ribosomal subunit protein uL29 (60 aa).

This sequence belongs to the universal ribosomal protein uL29 family.

The polypeptide is Large ribosomal subunit protein uL29 (Fusobacterium nucleatum subsp. nucleatum (strain ATCC 25586 / DSM 15643 / BCRC 10681 / CIP 101130 / JCM 8532 / KCTC 2640 / LMG 13131 / VPI 4355)).